The sequence spans 555 residues: MLTKPGKKLDSSESTHHTTSSNYPPLDIVHQTPQPRKEMQQKPLFDPKKMDNLIKPEPAGFTNHHRPNPSPKIPSSPGSNMTESQSNLNTKPNNNNSNNNSNMSSRSNSIESTSSNPSKPHTGGDIRWDAVNTLTSKGVQLGISDFRLLKRLGYGDIGSVYLVELRGTITYFAMKVMDKASLASRNKLLRAQTEREILSQLDHPFLPTLYSHFETDKFYCLVMEFCGGGNLYSLRQKQPNKCFTEDAARFFASEVLLALEYLHMLGIVYRDLKPENVLVRDDGHIMLSDFDLSLRCSVSPTLVKSSSVHAAGGGSGSSRPVGLIDEDAAVQGCIQPSTFFPRILQSSKKNRKAKSDFGLFVNGSMPELMAEPTNVKSMSFVGTHEYLAPEIIRGEGHGSAVDWWTFGIFIYELLYGATPFKGQGNRATLHNVIGQALRFPEVPHVSSAARDLIKGLLVKEPQKRIAYKRGATEIKQHPFFEGVNWALIRSATPPHVPEPVDFSCYASKDKESMAAVDGGGKKNNNGAGGGCSTGGGDNKPNGDCNDPDYIDFEYF.

The interval 1–126 (MLTKPGKKLD…PSKPHTGGDI (126 aa)) is disordered. Basic and acidic residues-rich tracts occupy residues 7–16 (KKLDSSESTH) and 35–54 (PRKE…DNLI). The segment covering 84–118 (SQSNLNTKPNNNNSNNNSNMSSRSNSIESTSSNPS) has biased composition (low complexity). In terms of domain architecture, Protein kinase spans 146–480 (FRLLKRLGYG…ATEIKQHPFF (335 aa)). Residues 152–160 (LGYGDIGSV) and Lys-175 contribute to the ATP site. Asp-271 acts as the Proton acceptor in catalysis. In terms of domain architecture, AGC-kinase C-terminal spans 481–555 (EGVNWALIRS…DPDYIDFEYF (75 aa)). A disordered region spans residues 514–547 (AAVDGGGKKNNNGAGGGCSTGGGDNKPNGDCNDP). A compositionally biased stretch (gly residues) spans 526–537 (GAGGGCSTGGGD).

This sequence belongs to the protein kinase superfamily. AGC Ser/Thr protein kinase family. As to quaternary structure, interacts with PDPK1/PDK1. Autophosphorylated and phosphorylated by PDPK1/PDK1. In terms of tissue distribution, specifically expressed in pollen grains.

Its subcellular location is the cytoplasm. It catalyses the reaction L-seryl-[protein] + ATP = O-phospho-L-seryl-[protein] + ADP + H(+). The enzyme catalyses L-threonyl-[protein] + ATP = O-phospho-L-threonyl-[protein] + ADP + H(+). Activated by PDPK1/PDK1. Its function is as follows. Functions redudantly with AGC1-5 as signaling component in the pollen tube. Required for polarized growth of pollen tubes. The polypeptide is Serine/threonine-protein kinase AGC1-7 (Arabidopsis thaliana (Mouse-ear cress)).